Consider the following 407-residue polypeptide: Obg-like ATPase homolog (407 aa).

An OBG-type G domain is found at 46–301 (LKIGIVGMPN…LTPEEAAQEC (256 aa)). ATP-binding positions include 55 to 60 (NIGKST) and M249. One can recognise a TGS domain in the interval 322-405 (NLIHYFTASE…EPGDIIFWKI (84 aa)).

Belongs to the TRAFAC class OBG-HflX-like GTPase superfamily. OBG GTPase family.

Hydrolyzes ATP, and can also hydrolyze GTP with lower efficiency. Has lower affinity for GTP. This is Obg-like ATPase homolog from Schizosaccharomyces pombe (strain 972 / ATCC 24843) (Fission yeast).